The following is a 41-amino-acid chain: Diuretic hormone 1 (41 aa).

Position 41 is an isoleucine amide (Ile41).

The protein localises to the secreted. In terms of biological role, regulation of fluid secretion. May stimulate primary urine secretion by Malpighian tubules and causes a dose-dependent stimulation of cAMP levels in the tubules. In Hyles lineata (White-lined sphinx moth), this protein is Diuretic hormone 1.